The following is a 313-amino-acid chain: Ribosomal protein uL3 glutamine methyltransferase (313 aa).

It belongs to the protein N5-glutamine methyltransferase family. PrmB subfamily.

It carries out the reaction L-glutaminyl-[ribosomal protein uL3] + S-adenosyl-L-methionine = N(5)-methyl-L-glutaminyl-[ribosomal protein uL3] + S-adenosyl-L-homocysteine + H(+). Functionally, methylates large ribosomal subunit protein uL3 on a specific glutamine residue. The chain is Ribosomal protein uL3 glutamine methyltransferase from Pasteurella multocida (strain Pm70).